Reading from the N-terminus, the 201-residue chain is TATA-box-binding protein 2 (201 aa).

2 repeat units span residues 26–102 (LQNI…ARII) and 116–193 (IQNI…YPVL).

Belongs to the TBP family. In terms of assembly, belongs to the TFIID complex together with the TBP-associated factors (TAFs). Binds DNA as monomer.

The protein localises to the nucleus. General transcription factor that functions at the core of the DNA-binding multiprotein factor TFIID. Binding of TFIID to the TATA box is the initial transcriptional step of the pre-initiation complex (PIC), playing a role in the activation of eukaryotic genes transcribed by RNA polymerase II. In Triticum aestivum (Wheat), this protein is TATA-box-binding protein 2 (TBP2).